The sequence spans 41 residues: Histone H3.2 (41 aa).

Positions 1–41 (MARTKQTARKSTGAKAPRKQLASKAARKSAPATGGIKKPHR) are disordered.

This sequence belongs to the histone H3 family. As to quaternary structure, the nucleosome is a histone octamer containing two molecules each of H2A, H2B, H3 and H4 assembled in one H3-H4 heterotetramer and two H2A-H2B heterodimers. The octamer wraps approximately 147 bp of DNA.

Its subcellular location is the nucleus. The protein resides in the chromosome. Functionally, core component of nucleosome. Nucleosomes wrap and compact DNA into chromatin, limiting DNA accessibility to the cellular machineries which require DNA as a template. Histones thereby play a central role in transcription regulation, DNA repair, DNA replication and chromosomal stability. DNA accessibility is regulated via a complex set of post-translational modifications of histones, also called histone code, and nucleosome remodeling. This is Histone H3.2 from Tetrahymena australis.